Consider the following 189-residue polypeptide: Lipid A acyltransferase PagP (189 aa).

An N-terminal signal peptide occupies residues 1–23 (MKLKSVLYLLMLLNCLGLKSAHA). Residues histidine 61, aspartate 104, and serine 105 contribute to the active site.

The protein belongs to the lipid A palmitoyltransferase family. As to quaternary structure, homodimer.

It is found in the cell outer membrane. It carries out the reaction a lipid A + a 1,2-diacyl-sn-glycero-3-phosphocholine = a hepta-acyl lipid A + a 2-acyl-sn-glycero-3-phosphocholine. The enzyme catalyses a lipid IVA + a 1,2-diacyl-sn-glycero-3-phosphocholine = a lipid IVB + a 2-acyl-sn-glycero-3-phosphocholine. The catalysed reaction is a lipid IIA + a 1,2-diacyl-sn-glycero-3-phosphocholine = a lipid IIB + a 2-acyl-sn-glycero-3-phosphocholine. Functionally, transfers a fatty acid residue from the sn-1 position of a phospholipid to the N-linked hydroxyfatty acid chain on the proximal unit of lipid A or its precursors. This is Lipid A acyltransferase PagP from Erwinia amylovora (strain ATCC 49946 / CCPPB 0273 / Ea273 / 27-3).